A 275-amino-acid polypeptide reads, in one-letter code: NH(3)-dependent NAD(+) synthetase (275 aa).

50–57 (GISGGVDS) is an ATP binding site. Position 56 (D56) interacts with Mg(2+). R147 serves as a coordination point for deamido-NAD(+). T167 is an ATP binding site. A Mg(2+)-binding site is contributed by E172. Positions 180 and 187 each coordinate deamido-NAD(+). 2 residues coordinate ATP: K196 and T218. 267 to 268 (HK) is a binding site for deamido-NAD(+).

Belongs to the NAD synthetase family. As to quaternary structure, homodimer.

The enzyme catalyses deamido-NAD(+) + NH4(+) + ATP = AMP + diphosphate + NAD(+) + H(+). The protein operates within cofactor biosynthesis; NAD(+) biosynthesis; NAD(+) from deamido-NAD(+) (ammonia route): step 1/1. Functionally, catalyzes the ATP-dependent amidation of deamido-NAD to form NAD. Uses ammonia as a nitrogen source. In Pseudomonas entomophila (strain L48), this protein is NH(3)-dependent NAD(+) synthetase.